The sequence spans 414 residues: MEQLQSLRGMVDLLPAATSRWQWLEQTAREHFRRSCIREIRTPLLEATELFARGIGEATDVVGKEMYSFNDRGDRSCTLRPEGTASVVRAAIQHGLLSQGAQRLWYGGPMFRYERPQGGRQRQFHQIGIEFLGFADPRSDVEAIAIAWDLLEALGITGLQLELNSLGSRVDRQTYRDALVGWLSERQNQLDADSQQRLATNPLRILDSKNPQTQQLLQDAPNLEQSLSDPSRERYEQVKAGLSALKIPYLCNPRLVRGLDYYGHTAFEITSDALGAQATVCGGGRYDGLVEQLGGPAAACVGWAMGLERLMLLLGDESQQSQPPDVVVISQGNAAEALAVPVARQLRQIGQAVDVDLSGAGFGKQLKRAGKSGARWAVLIGDEEASSGQLQRKDLHSGDSSTIALQSLAENWIS.

This sequence belongs to the class-II aminoacyl-tRNA synthetase family. As to quaternary structure, homodimer.

The protein localises to the cytoplasm. The enzyme catalyses tRNA(His) + L-histidine + ATP = L-histidyl-tRNA(His) + AMP + diphosphate + H(+). The polypeptide is Histidine--tRNA ligase (Synechococcus sp. (strain RCC307)).